The chain runs to 501 residues: tRNA (guanine(37)-N(1))-methyltransferase (501 aa).

S-adenosyl-L-methionine-binding positions include His-282, 320-321 (DL), 348-349 (DG), and Asn-380. The interval 474–501 (LQNDQEPPLKRQKTGDPFSGEPQIASDS) is disordered.

This sequence belongs to the class I-like SAM-binding methyltransferase superfamily. TRM5/TYW2 family. In terms of assembly, monomer.

It localises to the mitochondrion matrix. Its subcellular location is the nucleus. It is found in the cytoplasm. The enzyme catalyses guanosine(37) in tRNA + S-adenosyl-L-methionine = N(1)-methylguanosine(37) in tRNA + S-adenosyl-L-homocysteine + H(+). Functionally, involved in mitochondrial tRNA methylation. Specifically methylates the N1 position of guanosine-37 in various tRNAs. Methylation is not dependent on the nature of the nucleoside 5' of the target nucleoside. This is the first step in the biosynthesis of wybutosine (yW), a modified base adjacent to the anticodon of tRNAs and required for accurate decoding. In Mus musculus (Mouse), this protein is tRNA (guanine(37)-N(1))-methyltransferase (Trmt5).